The sequence spans 452 residues: tRNA modification GTPase MnmE (452 aa).

Residues Arg-23, Glu-80, and Lys-119 each coordinate (6S)-5-formyl-5,6,7,8-tetrahydrofolate. The region spanning 215-374 is the TrmE-type G domain; the sequence is GIWIALVGQP…LQQGLLEMIG (160 aa). A K(+)-binding site is contributed by Asn-225. GTP contacts are provided by residues 225-230, 244-250, and 269-272; these read NVGKSS, TEVPGTT, and DTAG. Residue Ser-229 coordinates Mg(2+). K(+) is bound by residues Thr-244, Val-246, and Thr-249. Thr-250 serves as a coordination point for Mg(2+). Lys-452 serves as a coordination point for (6S)-5-formyl-5,6,7,8-tetrahydrofolate.

This sequence belongs to the TRAFAC class TrmE-Era-EngA-EngB-Septin-like GTPase superfamily. TrmE GTPase family. As to quaternary structure, homodimer. Heterotetramer of two MnmE and two MnmG subunits. K(+) is required as a cofactor.

It localises to the cytoplasm. Exhibits a very high intrinsic GTPase hydrolysis rate. Involved in the addition of a carboxymethylaminomethyl (cmnm) group at the wobble position (U34) of certain tRNAs, forming tRNA-cmnm(5)s(2)U34. The protein is tRNA modification GTPase MnmE of Nitrosospira multiformis (strain ATCC 25196 / NCIMB 11849 / C 71).